The primary structure comprises 878 residues: MADIDARLREDVHLLGELLGNTIREQRGAEFLDKIERIRKGAKAGRRGSAEGAEQLSSSVDGLEDDELLPVARAFNQFLNLANIAEQYQLMHRRDDAQPLPFESRVLSELLDRLKAEGHQPETLARQLSKLEIELVLTAHPTEVARRTLIQKYDAIATQLAALDHRDLNSAERAQITSRLQRLIAEAWHTEEIRRIRPTPVDEAKWGFAVIEHSLWHAIPNYLRKADHVLHAATGLHLPLESAPIRFASWMGGDRDGNPNVTAAVTREVLLLARWMAADLYLRDVDNLAAELSMQQASDALRASVGDSAEPYRAELKRLRERLRATRNWANASLTETLPAPEAVLRDNRELLDPLLLCFQSLHECGMGVIADGPLLDCLRRAVTFGLFLVRLDVRQDSTRHCAAMTEITDYLGLGRYEEWDEQTRIDFLLRELNNRRPLLPSYFKPAADTAEVLATCREVAAAPAASLGSYVISMAGSASDVLAVQLLLKESGLQRPMRVVPLFETLADLDNAGPVIETLLGLPGYRSRLQGPQEVMIGYSDSAKDAGTTAAAWAQYRAQEKLVEICREQQVELLLFHGRGGTVGRGGGPAHAAILSQPPGSVAGRFRTTEQGEMIRFKFGLPDIAEQNLNLYLAAVLEATLLPPPPPQPAWRTMMDQMASDGVSAYRAVVRENPEFVEYFRQATPEQELGRLPLGSRPAKRREGGVESLRAIPWIFAWTQTRLMLPAWLGWEAALSKALERGEGEVLAQMREQWPFFRTRIDMLEMVLAKADADIARLYDERLVTAELQHLGAHLRDLLSQACNVVLGLTGQTQLLAHSPETLEFISLRNAYLDPLHLLQAELLSRSRNREASLDSPLELALLVSVAGIAAGLRNTG.

Residues histidine 140 and lysine 545 contribute to the active site.

It belongs to the PEPCase type 1 family. Mg(2+) serves as cofactor.

It carries out the reaction oxaloacetate + phosphate = phosphoenolpyruvate + hydrogencarbonate. In terms of biological role, forms oxaloacetate, a four-carbon dicarboxylic acid source for the tricarboxylic acid cycle. The sequence is that of Phosphoenolpyruvate carboxylase from Pseudomonas syringae pv. tomato (strain ATCC BAA-871 / DC3000).